A 445-amino-acid chain; its full sequence is Phosphoglucosamine mutase (445 aa).

Ser105 functions as the Phosphoserine intermediate in the catalytic mechanism. Residues Ser105, Asp244, Asp246, and Asp248 each coordinate Mg(2+). Ser105 carries the phosphoserine modification.

It belongs to the phosphohexose mutase family. Requires Mg(2+) as cofactor. In terms of processing, activated by phosphorylation.

It carries out the reaction alpha-D-glucosamine 1-phosphate = D-glucosamine 6-phosphate. In terms of biological role, catalyzes the conversion of glucosamine-6-phosphate to glucosamine-1-phosphate. In Janthinobacterium sp. (strain Marseille) (Minibacterium massiliensis), this protein is Phosphoglucosamine mutase.